A 370-amino-acid polypeptide reads, in one-letter code: Putative agmatine deiminase (370 aa).

Cys361 (amidino-cysteine intermediate) is an active-site residue.

This sequence belongs to the agmatine deiminase family.

It carries out the reaction agmatine + H2O = N-carbamoylputrescine + NH4(+). This chain is Putative agmatine deiminase, found in Shewanella baltica (strain OS195).